The following is a 226-amino-acid chain: Ribonuclease 3 (226 aa).

One can recognise an RNase III domain in the interval 7–129; sequence LPRLCRTLGY…IIGAIYLDSD (123 aa). Glutamate 42 contacts Mg(2+). The active site involves aspartate 46. Positions 115 and 118 each coordinate Mg(2+). Glutamate 118 is an active-site residue. In terms of domain architecture, DRBM spans 156–226; that stretch reads DAKTLLQEYL…AAQVLELLKK (71 aa).

This sequence belongs to the ribonuclease III family. As to quaternary structure, homodimer. Mg(2+) serves as cofactor.

Its subcellular location is the cytoplasm. The enzyme catalyses Endonucleolytic cleavage to 5'-phosphomonoester.. Its function is as follows. Digests double-stranded RNA. Involved in the processing of primary rRNA transcript to yield the immediate precursors to the large and small rRNAs (23S and 16S). Processes some mRNAs, and tRNAs when they are encoded in the rRNA operon. Processes pre-crRNA and tracrRNA of type II CRISPR loci if present in the organism. The sequence is that of Ribonuclease 3 from Shewanella sp. (strain MR-7).